A 216-amino-acid chain; its full sequence is Octanoyltransferase (216 aa).

One can recognise a BPL/LPL catalytic domain in the interval 32-211 (QEASEMLWFL…RFPYFLEALQ (180 aa)). Substrate is bound by residues 71 to 78 (RGGRYTYH), 142 to 144 (AIG), and 155 to 157 (GFS). The active-site Acyl-thioester intermediate is the C173.

It belongs to the LipB family.

The protein localises to the cytoplasm. The catalysed reaction is octanoyl-[ACP] + L-lysyl-[protein] = N(6)-octanoyl-L-lysyl-[protein] + holo-[ACP] + H(+). The protein operates within protein modification; protein lipoylation via endogenous pathway; protein N(6)-(lipoyl)lysine from octanoyl-[acyl-carrier-protein]: step 1/2. Functionally, catalyzes the transfer of endogenously produced octanoic acid from octanoyl-acyl-carrier-protein onto the lipoyl domains of lipoate-dependent enzymes. Lipoyl-ACP can also act as a substrate although octanoyl-ACP is likely to be the physiological substrate. The protein is Octanoyltransferase of Zymomonas mobilis subsp. mobilis (strain ATCC 31821 / ZM4 / CP4).